Reading from the N-terminus, the 514-residue chain is 2-isopropylmalate synthase (514 aa).

The region spanning 5–268 (LIIFDTTLRD…DVGIDTTQIV (264 aa)) is the Pyruvate carboxyltransferase domain. Mn(2+) contacts are provided by D14, H202, H204, and N239. A regulatory domain region spans residues 395-514 (KFVSLSQHSE…KDDKLNPQRA (120 aa)).

It belongs to the alpha-IPM synthase/homocitrate synthase family. LeuA type 1 subfamily. Homodimer. The cofactor is Mn(2+).

Its subcellular location is the cytoplasm. It catalyses the reaction 3-methyl-2-oxobutanoate + acetyl-CoA + H2O = (2S)-2-isopropylmalate + CoA + H(+). It participates in amino-acid biosynthesis; L-leucine biosynthesis; L-leucine from 3-methyl-2-oxobutanoate: step 1/4. Its function is as follows. Catalyzes the condensation of the acetyl group of acetyl-CoA with 3-methyl-2-oxobutanoate (2-ketoisovalerate) to form 3-carboxy-3-hydroxy-4-methylpentanoate (2-isopropylmalate). In Burkholderia vietnamiensis (strain G4 / LMG 22486) (Burkholderia cepacia (strain R1808)), this protein is 2-isopropylmalate synthase.